A 481-amino-acid chain; its full sequence is GDP-fucose protein O-fucosyltransferase 2 (481 aa).

Positions 1 to 22 (MKGRAHIWVALLLACLPPRFRN) are cleaved as a signal peptide. GDP-beta-L-fucose-binding positions include 59 to 63 (GEGFN), 287 to 289 (HLR), Asp-365, and 382 to 383 (RF). Residue Glu-60 is the Proton acceptor of the active site.

This sequence belongs to the glycosyltransferase 68 family.

The protein resides in the endoplasmic reticulum. The enzyme catalyses L-seryl-[protein] + GDP-beta-L-fucose = 3-O-(alpha-L-fucosyl)-L-seryl-[protein] + GDP + H(+). It catalyses the reaction L-threonyl-[protein] + GDP-beta-L-fucose = 3-O-(alpha-L-fucosyl)-L-threonyl-[protein] + GDP + H(+). It participates in protein modification; protein glycosylation. Functionally, catalyzes the reaction that attaches fucose through an O-glycosidic linkage to a conserved serine or threonine residue in the consensus sequence C1-X-X-S/T-C2 of thrombospondin type I repeats (TSRs) where C1 and C2 are the first and second cysteines of the repeat, respectively. O-fucosylates sporozoite proteins CSP and TRAP. O-fucosylation regulates stability and intracellular trafficking of TRAP but not of CSP. Probably by regulating protein O-fucosylation, may play a role in parasite transmission to the mosquito vector and/or infection of the vertebrate host hepatocytes; however, POFUT2 involvement in transmission/infection is controversial. The polypeptide is GDP-fucose protein O-fucosyltransferase 2 (Plasmodium vivax (strain Salvador I)).